Reading from the N-terminus, the 950-residue chain is MIDLSFLTEEEQDAILKVLQRDAALKRAEEERVRHLPEKIKDDQQLKNMSGQWFYEAKAKRHRDKIHGADIIRASMRRKKLPAAAEQNKDTAMRAKESWVNNVNKDAVLPPEIAVVEEPEDDTDPAGPSSSLVDPASSVIDMSQESTRTPAVSLPKQRKNPFNSPKLPEDHSLQQTKPEQSKTGKAGLFQISKEGELSESKEKSSIPDMPRQQLEKPKQTVSTEPENASHTKAPIPKARKLIYKSNDLEKDDNQSFPRQRRDSLNARGAPRGILKRNSSSSSTDSETLRLNYNLDPKSKILSPGLTIHERISEKEFSLEDDSSTSSLEPLKHVRFSAVKNELPQSPRPVLGQEVGEFTVLESDQLQNGTEDAGDIEEFQNHPELSHKTPLSHYQLVSSPSDSGREREQLMSSGSAPRDEIPCHSDILPTGPQCVESSSVINGQQEKSSHFTKLPSELSKSPSDELTQCGEPEPSQTADHSFRDHRQGSEEEHSPVLKTLERRAARKLPSKSLEDIPSDSSNQAKVDNLPEELVRSAEDDQKADQEPDTNECIPGISTVPSLPDNQFSHPDKLKRMSKSVPAFLQDESDDRETDTASESSYQLRRYKKSPSSLTNLSSSSGMTSLSSASGSVMSVYSGDFGNLEVKGSVQFALDYVESLKELHVFVAQCKDLAAADVKKQRSDPYVKTYLLPDKGKMGKKKTLVVKKTLNPVYNEILRYKIERQFLKTQKLNLSVWHRDTFKRNSFLGEVELDLETWDWDSKQNKQLKWYPLKRKTAPVALETENRGEMKLALQYVPEPSPGKKLPTTGEVHIWVKECLDLPLLRGSHLNSFVKCTILPDTSRKSRQKTRAVGKTTNPVFNHTMVYDGFRPEDLMEACVELTVWDHYKLTNQFLGGLRIGFGTGKSYGTEVDWMDSTSEEVALWEKMVNSPNTWVEATLPLRMLLIAKLSK.

In terms of domain architecture, RabBD spans Met1–Ala57. Disordered regions lie at residues Arg78–Ser98, Val116–Arg289, and Glu361–Gly620. A compositionally biased stretch (basic and acidic residues) spans Gln87–Glu97. Polar residues-rich tracts occupy residues Ile140 to Pro150 and Leu173 to Thr183. The segment covering Lys193–Ser205 has biased composition (basic and acidic residues). The span at Gln219–His230 shows a compositional bias: polar residues. Residues Asn246 to Leu264 show a composition bias toward basic and acidic residues. The segment covering Val434–Glu445 has biased composition (polar residues). 2 stretches are compositionally biased toward basic and acidic residues: residues His479–Arg502 and Glu531–Gln544. The span at Thr557–Ser567 shows a compositional bias: polar residues. A compositionally biased stretch (low complexity) spans Ser608 to Gly620. 2 consecutive C2 domains span residues Val644 to Tyr769 and Asn784 to Met913.

Monomer. Binds NRXN1. Binds RAB27A that has been activated by GTP-binding. Interacts with RAB27B. In terms of processing, isoform 1 is highly susceptible to proteolytic degradation and is stabilized by the interaction with RAB27A. In terms of tissue distribution, highly expressed in brain, lung, kidney, testis and in embryos after day 7. Detected at lower levels in skeletal muscle. Expressed in pancreatic alpha cells. Isoform 6 is highly expressed in brain, but not detectable in the other tissues tested. Isoform 1 is expressed abundantly in the stomach and is predominantly localized at the apical region of gastric-surface mucus cells. Isoform 11 is expressed in cytotoxic T-lymphocytes (CTL).

It localises to the melanosome membrane. Its subcellular location is the cell membrane. In terms of biological role, isoform 11 acts as a RAB27A effector protein and plays a role in cytotoxic granule exocytosis in lymphocytes. Required for cytotoxic granule docking at the immunologic synapse. Isoform 1 may play a role in melanosome transport and vesicle trafficking. It controls melanosome distribution in the cell periphery and regulates melanocyte morphology. Isoform 1 acts as a positive mediator of mucus secretion by the surface mucus cells of the stomach. Mediates basal mucus secretion by gastric surface cells by promoting the proper granule biognesis and docking of mucus granules with the apical plasma membrane. In Mus musculus (Mouse), this protein is Synaptotagmin-like protein 2 (Sytl2).